Here is a 371-residue protein sequence, read N- to C-terminus: Queuine tRNA-ribosyltransferase (371 aa).

The Proton acceptor role is filled by D90. Substrate is bound by residues 90–94 (DSGGF), D144, Q189, and G215. The interval 246–252 (GVGTPEN) is RNA binding. The active-site Nucleophile is D265. The interval 270–274 (TRNAR) is RNA binding; important for wobble base 34 recognition. The Zn(2+) site is built by C303, C305, C308, and H334.

This sequence belongs to the queuine tRNA-ribosyltransferase family. Homodimer. Within each dimer, one monomer is responsible for RNA recognition and catalysis, while the other monomer binds to the replacement base PreQ1. It depends on Zn(2+) as a cofactor.

It carries out the reaction 7-aminomethyl-7-carbaguanine + guanosine(34) in tRNA = 7-aminomethyl-7-carbaguanosine(34) in tRNA + guanine. Its pathway is tRNA modification; tRNA-queuosine biosynthesis. Its function is as follows. Catalyzes the base-exchange of a guanine (G) residue with the queuine precursor 7-aminomethyl-7-deazaguanine (PreQ1) at position 34 (anticodon wobble position) in tRNAs with GU(N) anticodons (tRNA-Asp, -Asn, -His and -Tyr). Catalysis occurs through a double-displacement mechanism. The nucleophile active site attacks the C1' of nucleotide 34 to detach the guanine base from the RNA, forming a covalent enzyme-RNA intermediate. The proton acceptor active site deprotonates the incoming PreQ1, allowing a nucleophilic attack on the C1' of the ribose to form the product. After dissociation, two additional enzymatic reactions on the tRNA convert PreQ1 to queuine (Q), resulting in the hypermodified nucleoside queuosine (7-(((4,5-cis-dihydroxy-2-cyclopenten-1-yl)amino)methyl)-7-deazaguanosine). The sequence is that of Queuine tRNA-ribosyltransferase from Helicobacter pylori (strain Shi470).